Here is a 396-residue protein sequence, read N- to C-terminus: Elongation factor Tu (396 aa).

The tr-type G domain maps to 10–206 (KPHVNVGTIG…ALDTYIPTPE (197 aa)). The G1 stretch occupies residues 19–26 (GHVDHGKT). 19-26 (GHVDHGKT) contributes to the GTP binding site. Thr-26 contacts Mg(2+). A G2 region spans residues 60-64 (GITIN). Residues 81 to 84 (DCPG) are G3. GTP-binding positions include 81–85 (DCPGH) and 136–139 (NKCD). The interval 136-139 (NKCD) is G4. Residues 174-176 (SAK) form a G5 region.

This sequence belongs to the TRAFAC class translation factor GTPase superfamily. Classic translation factor GTPase family. EF-Tu/EF-1A subfamily. As to quaternary structure, monomer.

The protein localises to the cytoplasm. The catalysed reaction is GTP + H2O = GDP + phosphate + H(+). GTP hydrolase that promotes the GTP-dependent binding of aminoacyl-tRNA to the A-site of ribosomes during protein biosynthesis. This chain is Elongation factor Tu, found in Cupriavidus pinatubonensis (strain JMP 134 / LMG 1197) (Cupriavidus necator (strain JMP 134)).